A 184-amino-acid chain; its full sequence is ATP-dependent protease subunit HslV (184 aa).

Residue Thr12 is part of the active site. The Na(+) site is built by Gly167, Cys170, and Thr173.

Belongs to the peptidase T1B family. HslV subfamily. A double ring-shaped homohexamer of HslV is capped on each side by a ring-shaped HslU homohexamer. The assembly of the HslU/HslV complex is dependent on binding of ATP.

It localises to the cytoplasm. The catalysed reaction is ATP-dependent cleavage of peptide bonds with broad specificity.. With respect to regulation, allosterically activated by HslU binding. Functionally, protease subunit of a proteasome-like degradation complex believed to be a general protein degrading machinery. The chain is ATP-dependent protease subunit HslV from Wolbachia sp. subsp. Drosophila simulans (strain wRi).